The chain runs to 234 residues: Staphylococcal superantigen-like 5 (234 aa).

Positions 1-30 (MKMTAIAKASLALGILATGTITSLHQTVNA) are cleaved as a signal peptide.

The protein belongs to the staphylococcal/streptococcal toxin family. As to quaternary structure, interacts with host SELPLG; this interaction prevents SELPLG-mediated neutrophil rolling. Interacts with host MMP9 (via sialic acid-containing O-glycans); this interaction inhibits MMP9 activity. Interacts with host GP1BA and GP6; these interactions play an important role in platelet binding and activation.

Its function is as follows. Secreted protein that plays a role in the inhibition of host innate immune system. Modulates the interaction between host SELPLG and P-selectin thereby preventing initial rolling of neutrophils toward the site of infection. Interferes with leukocyte trafficking by inhibiting host metalloproteinase-9/MMP9 activity. Also associates with two different platelet surface receptors GP1A and GP6 leading to platelet activation and aggregation. This is Staphylococcal superantigen-like 5 from Staphylococcus aureus (strain NCTC 8325 / PS 47).